Here is a 102-residue protein sequence, read N- to C-terminus: Large ribosomal subunit protein bL21 (102 aa).

It belongs to the bacterial ribosomal protein bL21 family. In terms of assembly, part of the 50S ribosomal subunit. Contacts protein L20.

Its function is as follows. This protein binds to 23S rRNA in the presence of protein L20. The protein is Large ribosomal subunit protein bL21 of Campylobacter jejuni subsp. doylei (strain ATCC BAA-1458 / RM4099 / 269.97).